Reading from the N-terminus, the 510-residue chain is 2,3-bisphosphoglycerate-independent phosphoglycerate mutase (510 aa).

Mn(2+) contacts are provided by Asp15 and Ser65. Catalysis depends on Ser65, which acts as the Phosphoserine intermediate. Substrate-binding positions include His126, 155-156 (RD), Arg187, Arg193, 259-262 (RPDR), and Lys332. Mn(2+)-binding residues include Asp399, His403, Asp440, His441, and His458.

Belongs to the BPG-independent phosphoglycerate mutase family. Mn(2+) is required as a cofactor.

The protein resides in the plastid. It localises to the chloroplast. The enzyme catalyses (2R)-2-phosphoglycerate = (2R)-3-phosphoglycerate. Its pathway is carbohydrate degradation; glycolysis; pyruvate from D-glyceraldehyde 3-phosphate: step 3/5. Catalyzes the interconversion of 2-phosphoglycerate and 3-phosphoglycerate. In Antithamnion sp. (Red alga), this protein is 2,3-bisphosphoglycerate-independent phosphoglycerate mutase.